A 437-amino-acid chain; its full sequence is MLWKLTDNIKYEDCEDRHDGASNGTARLPQLGTVGQSPYTSAPPLSHTPNADFQPPYFPPPYQPIYPQSQDPYSHVNDPYSLNPLHAQPQPQHPGWPGQRQSQESGLLHTHRGLPHQLSGLDPRRDYRRHEDLLHGPHGLGSGLGDLPIHSLPHAIEDVPHVEDPGINIPDQTVIKKGPVSLSKSNSNAVSAIPINKDNLFGGVVNPNEVFCSVPGRLSLLSSTSKYKVTVAEVQRRLSPPECLNASLLGGVLRRAKSKNGGRSLREKLDKIGLNLPAGRRKAANVTLLTSLVEGEAVHLARDFGYVCETEFPAKAVAEFLNRQHSDPNEQVTRKNMLLATKQICKEFTDLLAQDRSPLGNSRPNPILEPGIQSCLTHFNLISHGFGSPAVCAAVTALQNYLTEALKAMDKMYLSNNPNSHTDNNAKSSDKEEKHRK.

K10 participates in a covalent cross-link: Glycyl lysine isopeptide (Lys-Gly) (interchain with G-Cter in SUMO); alternate. K10 is covalently cross-linked (Glycyl lysine isopeptide (Lys-Gly) (interchain with G-Cter in SUMO2); alternate). Residues 14 to 107 (CEDRHDGASN…GQRQSQESGL (94 aa)) are disordered. The PPxY motif signature appears at 57 to 62 (YFPPPY). 2 stretches are compositionally biased toward low complexity: residues 65–74 (IYPQSQDPYS) and 88–101 (QPQP…GQRQ). Glycyl lysine isopeptide (Lys-Gly) (interchain with G-Cter in SUMO2) cross-links involve residues K177 and K184. Phosphoserine; by PKA is present on S239. The segment at 280 to 410 (RRKAANVTLL…YLTEALKAMD (131 aa)) is H-S-H (helix-span-helix), dimerization. The segment covering 414-427 (LSNNPNSHTDNNAK) has biased composition (polar residues). The segment at 414-437 (LSNNPNSHTDNNAKSSDKEEKHRK) is disordered. Residues 428-437 (SSDKEEKHRK) show a composition bias toward basic and acidic residues.

The protein belongs to the AP-2 family. Binds DNA as a dimer. Can form homodimers or heterodimers with other AP-2 family members. Interacts with WWOX. Interacts with CITED4. Interacts with UBE2I. Interacts with RALBP1 in a complex also containing EPN1 and NUMB during interphase and mitosis. Interacts with KCTD1; this interaction represses transcription activation. Interacts (via C-terminus) with CITED2 (via C-terminus); the interaction stimulates TFAP2A-transcriptional activation. Interacts (via N-terminus) with EP300 (via N-terminus); the interaction requires CITED2. Interacts with KCTD15; this interaction inhibits TFAP2A transcriptional activation. Post-translationally, sumoylated on Lys-10; which inhibits transcriptional activity.

The protein resides in the nucleus. In terms of biological role, sequence-specific DNA-binding protein that interacts with inducible viral and cellular enhancer elements to regulate transcription of selected genes. AP-2 factors bind to the consensus sequence 5'-GCCNNNGGC-3' and activate genes involved in a large spectrum of important biological functions including proper eye, face, body wall, limb and neural tube development. They also suppress a number of genes including MCAM/MUC18, C/EBP alpha and MYC. AP-2-alpha is the only AP-2 protein required for early morphogenesis of the lens vesicle. Together with the CITED2 coactivator, stimulates the PITX2 P1 promoter transcription activation. Associates with chromatin to the PITX2 P1 promoter region. The chain is Transcription factor AP-2-alpha (TFAP2A) from Bos taurus (Bovine).